We begin with the raw amino-acid sequence, 1092 residues long: Neural cell adhesion molecule 1-B (1092 aa).

The first 19 residues, methionine 1 to alanine 19, serve as a signal peptide directing secretion. 5 consecutive Ig-like C2-type domains span residues leucine 20–asparagine 108, glutamine 113–glutamine 202, proline 208–valine 295, proline 303–glutamine 397, and proline 400–valine 489. The Extracellular portion of the chain corresponds to leucine 20–threonine 705. 2 disulfides stabilise this stretch: cysteine 41-cysteine 93 and cysteine 136-cysteine 186. Asparagine 82 carries an N-linked (GlcNAc...) asparagine glycan. Heparin contacts are provided by residues arginine 149–lysine 153 and lysine 158–arginine 162. N-linked (GlcNAc...) asparagine glycosylation occurs at asparagine 219. Cysteine 232 and cysteine 282 are joined by a disulfide. 5 N-linked (GlcNAc...) asparagine glycosylation sites follow: asparagine 310, asparagine 341, asparagine 417, asparagine 443, and asparagine 472. An intrachain disulfide couples cysteine 323 to cysteine 379. Cysteine 420 and cysteine 473 form a disulfide bridge. Fibronectin type-III domains are found at residues threonine 493–valine 592 and glutamate 595–proline 691. Residues glycine 706 to valine 723 form a helical membrane-spanning segment. The Cytoplasmic portion of the chain corresponds to aspartate 724–alanine 1092. The span at lysine 754–asparagine 784 shows a compositional bias: basic and acidic residues. Disordered regions lie at residues lysine 754–phenylalanine 1005 and threonine 1024–alanine 1092. Composition is skewed to low complexity over residues threonine 820–threonine 832 and serine 839–threonine 851. Polar residues predominate over residues aspartate 860 to proline 871. A compositionally biased stretch (low complexity) spans proline 917–alanine 929. Positions alanine 968–glutamate 978 are enriched in polar residues. The segment covering alanine 1050–valine 1068 has biased composition (basic and acidic residues). The span at asparagine 1080–alanine 1092 shows a compositional bias: polar residues.

Post-translationally, polysialylated by ST8SIA2 and ST8SIA4. Polysialylation modulates cell interactions by confering both attractive and repulsive properties that are highly regulated by ST8SIA2 and ST8SIA4. Polysialylation is formed on a-2,3-linked sialic acid of core glycans.

Its subcellular location is the cell membrane. Its function is as follows. This protein is a cell adhesion molecule involved in neuron-neuron adhesion, neurite fasciculation, outgrowth of neurites, etc. The chain is Neural cell adhesion molecule 1-B from Xenopus laevis (African clawed frog).